The primary structure comprises 472 residues: Methanethiol oxidase (472 aa).

N-acetylalanine is present on Ala-2. Ser-467 is modified (phosphoserine).

Belongs to the selenium-binding protein family. In terms of assembly, interacts with USP33. In terms of processing, the N-terminus is blocked.

Its subcellular location is the nucleus. The protein localises to the cytoplasm. It is found in the cytosol. It localises to the membrane. The catalysed reaction is methanethiol + O2 + H2O = hydrogen sulfide + formaldehyde + H2O2 + H(+). Its pathway is organosulfur degradation. Its function is as follows. Catalyzes the oxidation of methanethiol, an organosulfur compound known to be produced in substantial amounts by gut bacteria. Selenium-binding protein which may be involved in the sensing of reactive xenobiotics in the cytoplasm. May be involved in intra-Golgi protein transport. The sequence is that of Methanethiol oxidase (SELENBP1) from Bos taurus (Bovine).